A 330-amino-acid chain; its full sequence is Ferredoxin--NADP reductase (330 aa).

FAD is bound by residues Glu34, Gln42, Tyr47, Val87, Phe121, Asp285, and Ser325.

It belongs to the ferredoxin--NADP reductase type 2 family. In terms of assembly, homodimer. Requires FAD as cofactor.

It carries out the reaction 2 reduced [2Fe-2S]-[ferredoxin] + NADP(+) + H(+) = 2 oxidized [2Fe-2S]-[ferredoxin] + NADPH. The sequence is that of Ferredoxin--NADP reductase from Limosilactobacillus fermentum (strain NBRC 3956 / LMG 18251) (Lactobacillus fermentum).